A 513-amino-acid chain; its full sequence is Cytochrome P450 705A1 (513 aa).

Residues 9–29 (QNCFIIILLCSFSLISYFVFF) traverse the membrane as a helical segment. Residue cysteine 448 coordinates heme.

This sequence belongs to the cytochrome P450 family. The cofactor is heme. Expressed in root stele, root cortex, root epidermis, root pericycle of the root hair zone, and quiescent center at the root meristematic zone.

It is found in the membrane. Functionally, cleaves the arabidiol side chain at C15 to form 14-apo-arabidiol and a side-chain fragment. Involved in the biosynthesis of the volatile homoterpene (E)-4,8-dimethyl-1,3,7-nonatriene (DMNT) in roots. Involved in the production of DMNT by degrading the triterpene arabidiol. May be involved in the defense again the fungal root pathogen Pythium irregulare by producing DMNT. The chain is Cytochrome P450 705A1 from Arabidopsis thaliana (Mouse-ear cress).